The chain runs to 367 residues: MKETRDLLFYNENSIDFNFSPEEMDTHQMMCVNNDSQQDTSFLTATTCIFDFQKDIYDDQNLMSFDPFFPQQRDMALWIASVGNGAIDWSTKPQLTLSKKIPDVVNEKGEEITPADLQRHYADKHVAKLPDHSCDLYYLLFKHAKFEATTLRIPLSLLNDNGTGALGPFDEIRSLTDEEQRLLTLLKTISHYSWVTKHATKDCTGQLLDLCKEGLQLVESIQVNKTFNGVILHILVAYFGRRSTALRDEFQLHKLFLEQRLDIELEILAQHGGADAIDSEKLRKVKKLSELWEWFNAIPYNHHPSVSQIEFIASQIGEKVSFVKSWVANKRRTGAKKRSKKPAPSTQIRPALKVFLEKKPFVSRQVV.

Positions 273–338 form a DNA-binding region, homeobox; TALE-type; the sequence is GADAIDSEKL…NKRRTGAKKR (66 aa).

Belongs to the TALE/M-ATYP homeobox family. Forms a heterodimer with A1.

It localises to the nucleus. Functionally, mating type proteins are sequence specific DNA-binding proteins that act as master switches in yeast differentiation by controlling gene expression in a cell type-specific fashion. Transcriptional corepressor that acts in conjunction with A1 to repress transcription of haploid-specific genes. The chain is Mating-type protein ALPHA2 (MATB2) from Yarrowia lipolytica (strain CLIB 122 / E 150) (Yeast).